The sequence spans 83 residues: Short neurotoxin OKI-Ed (83 aa).

Residues 1–21 (MKTLLLTLVVVTIVCLDLGYT) form the signal peptide. Disulfide bonds link C24-C45, C38-C62, C64-C75, and C76-C81.

The protein belongs to the three-finger toxin family. Short-chain subfamily. Type I alpha-neurotoxin sub-subfamily. Expressed by the venom gland.

It is found in the secreted. Binds to muscle nicotinic acetylcholine receptor (nAChR) and inhibit acetylcholine from binding to the receptor, thereby impairing neuromuscular transmission. The polypeptide is Short neurotoxin OKI-Ed (Laticauda semifasciata (Black-banded sea krait)).